The following is a 243-amino-acid chain: MRSGVIAQKVGMTRVFTETGEHIPVTVLKLGNCQVLGHRTTEKNGYVAMQLGSGTRKTVYLPKAERGQFAVAKVEPKRKVAEFRVSEDALIPVGAEIQADHFVVGQFVDVTGTSVGKGFAGGIKRWNFGGLRATHGVSVSHRSIGSTGGRQDPGKTFKNKKMPGHMGVDRITTLNLRVVQTDVARGLILVEGAVPGSKGGWIAVRDAVKKVLPADAPKPGKFRLADGGGEQTAAAPAAEQEGV.

2 disordered regions span residues 139–164 (VSHR…KMPG) and 218–243 (KPGK…QEGV). At Gln-151 the chain carries N5-methylglutamine. Positions 231 to 243 (QTAAAPAAEQEGV) are enriched in low complexity.

This sequence belongs to the universal ribosomal protein uL3 family. As to quaternary structure, part of the 50S ribosomal subunit. Forms a cluster with proteins L14 and L19. In terms of processing, methylated by PrmB.

Functionally, one of the primary rRNA binding proteins, it binds directly near the 3'-end of the 23S rRNA, where it nucleates assembly of the 50S subunit. The sequence is that of Large ribosomal subunit protein uL3 from Rhodopseudomonas palustris (strain BisB18).